A 229-amino-acid polypeptide reads, in one-letter code: Transmembrane 4 L6 family member 20 (229 aa).

At 1-14 (MTCCEGWTSCNGFS) the chain is on the lumenal side. The helical transmembrane segment at 15–35 (LLVLLLLGVVLNAIPLIVSLV) threads the bilayer. Residues 36-44 (EEDQFSQNP) lie on the Cytoplasmic side of the membrane. Residues 45 to 65 (ISCFEWWFPGIIGAGLMAIPA) form a helical membrane-spanning segment. The Lumenal portion of the chain corresponds to 66 to 83 (TTMSLTARKRACCNNRTG). Residues 84-104 (MFLSSLFSVITVIGALYCMLI) traverse the membrane as a helical segment. Over 105 to 185 (SIQALLKGPL…HFDSEENKHR (81 aa)) the chain is Cytoplasmic. The helical transmembrane segment at 186–206 (LIHFSVFLGLLLVGILEVLFG) threads the bilayer. Over 207-229 (LSQIVIGFLGCLCGVSKRRSQIV) the chain is Lumenal.

This sequence belongs to the L6 tetraspanin family. Glycosylated at Asn-132, Asn-148 and Asn-163 in presence of ceramide which inverts the orientation of TM4SF20 in membranes exposing these residues to the endoplasmic reticulum lumen. In terms of processing, cleaved by signal peptidase at Ser-14 but the peptide does not act as a signal peptide. Cleavage is inhibited by ceramide which inverts the orientation of TM4SF20 in membranes exposing the N-terminus to the cytosol and not to the endoplasmic reticulum lumen. In terms of tissue distribution, expressed in the brain, with high levels in the parietal lobe, hippocampus, pons, white matter and cerebellum.

It is found in the membrane. The protein localises to the endoplasmic reticulum membrane. In terms of biological role, polytopic transmembrane protein that inhibits regulated intramembrane proteolysis (RIP) of CREB3L1, inhibiting its activation and the induction of collagen synthesis. In response to ceramide, which alters TM4SF20 membrane topology, stimulates RIP activation of CREB3L1. Ceramide reverses the direction through which transmembrane helices are translocated into the endoplasmic reticulum membrane during translation of TM4SF20, this mechanism is called 'regulated alternative translocation' (RAT) and regulates the function of the transmembrane protein. The sequence is that of Transmembrane 4 L6 family member 20 (TM4SF20) from Homo sapiens (Human).